We begin with the raw amino-acid sequence, 229 residues long: Uridylate kinase (229 aa).

Position 11 to 12 (11 to 12 (GS)) interacts with ATP. Residue glycine 45 coordinates UMP. Residues glycine 46 and arginine 50 each coordinate ATP. Residues aspartate 67 and 114 to 120 (TEPGHTT) contribute to the UMP site. The ATP site is built by threonine 140, tyrosine 146, and aspartate 149.

It belongs to the UMP kinase family. Homohexamer.

It is found in the cytoplasm. It catalyses the reaction UMP + ATP = UDP + ADP. Its pathway is pyrimidine metabolism; CTP biosynthesis via de novo pathway; UDP from UMP (UMPK route): step 1/1. With respect to regulation, inhibited by UTP. In terms of biological role, catalyzes the reversible phosphorylation of UMP to UDP. This chain is Uridylate kinase, found in Thermoplasma acidophilum (strain ATCC 25905 / DSM 1728 / JCM 9062 / NBRC 15155 / AMRC-C165).